The sequence spans 401 residues: Elongation factor Tu 2 (401 aa).

The region spanning 10–209 is the tr-type G domain; the sequence is KPHVNVGTIG…AVDEYIPTPV (200 aa). The segment at 19–26 is G1; it reads GHVDHGKT. 19 to 26 serves as a coordination point for GTP; the sequence is GHVDHGKT. Thr26 contacts Mg(2+). The segment at 60–64 is G2; that stretch reads GITIA. The segment at 81 to 84 is G3; the sequence is DCPG. Residues 81 to 85 and 136 to 139 contribute to the GTP site; these read DCPGH and NKVD. The tract at residues 136-139 is G4; it reads NKVD. Positions 174 to 176 are G5; sequence SAL.

It belongs to the TRAFAC class translation factor GTPase superfamily. Classic translation factor GTPase family. EF-Tu/EF-1A subfamily. In terms of assembly, monomer.

It localises to the cytoplasm. The catalysed reaction is GTP + H2O = GDP + phosphate + H(+). Functionally, GTP hydrolase that promotes the GTP-dependent binding of aminoacyl-tRNA to the A-site of ribosomes during protein biosynthesis. This is Elongation factor Tu 2 from Roseiflexus sp. (strain RS-1).